Consider the following 701-residue polypeptide: Elongation factor G (701 aa).

In terms of domain architecture, tr-type G spans lysine 6–leucine 286. GTP is bound by residues alanine 15–threonine 22, aspartate 83–histidine 87, and asparagine 137–aspartate 140.

It belongs to the TRAFAC class translation factor GTPase superfamily. Classic translation factor GTPase family. EF-G/EF-2 subfamily.

The protein resides in the cytoplasm. Catalyzes the GTP-dependent ribosomal translocation step during translation elongation. During this step, the ribosome changes from the pre-translocational (PRE) to the post-translocational (POST) state as the newly formed A-site-bound peptidyl-tRNA and P-site-bound deacylated tRNA move to the P and E sites, respectively. Catalyzes the coordinated movement of the two tRNA molecules, the mRNA and conformational changes in the ribosome. This Cytophaga hutchinsonii (strain ATCC 33406 / DSM 1761 / CIP 103989 / NBRC 15051 / NCIMB 9469 / D465) protein is Elongation factor G.